A 161-amino-acid polypeptide reads, in one-letter code: Nucleotide-binding protein Bcep18194_A5887 (161 aa).

The protein belongs to the YajQ family.

Its function is as follows. Nucleotide-binding protein. This Burkholderia lata (strain ATCC 17760 / DSM 23089 / LMG 22485 / NCIMB 9086 / R18194 / 383) protein is Nucleotide-binding protein Bcep18194_A5887.